The sequence spans 323 residues: Digestive cysteine proteinase 2 (323 aa).

An N-terminal signal peptide occupies residues 1 to 16 (MKVAVLFLCGVALAAA). Residues 17–107 (SPSWEHFKGK…FYPKKETGPQ (91 aa)) constitute a propeptide, activation peptide. 3 disulfides stabilise this stretch: C128–C171, C162–C204, and C263–C312. Residue C131 is part of the active site. Active-site residues include H270 and N290.

It belongs to the peptidase C1 family.

With respect to regulation, inhibited by E-64, antipain, leupeptin, heavy metal ions, iodoacetic acid, dithionitrobenzene, p-hydroxymercuri-benzoate; activated by mercaptoethanol and dithiothreitol. The sequence is that of Digestive cysteine proteinase 2 (LCP2) from Homarus americanus (American lobster).